Reading from the N-terminus, the 198-residue chain is Translation initiation factor IF-3 (198 aa).

The interval 168–198 (SLAPKKAGSPKKAETDTAKKENPKKAVETKE) is disordered. Residues 178-198 (KKAETDTAKKENPKKAVETKE) are compositionally biased toward basic and acidic residues.

Belongs to the IF-3 family. As to quaternary structure, monomer.

It localises to the cytoplasm. IF-3 binds to the 30S ribosomal subunit and shifts the equilibrium between 70S ribosomes and their 50S and 30S subunits in favor of the free subunits, thus enhancing the availability of 30S subunits on which protein synthesis initiation begins. This Phocaeicola vulgatus (strain ATCC 8482 / DSM 1447 / JCM 5826 / CCUG 4940 / NBRC 14291 / NCTC 11154) (Bacteroides vulgatus) protein is Translation initiation factor IF-3.